A 338-amino-acid polypeptide reads, in one-letter code: MTTVQEAVPNLIPTQDATPRPAPKKVEAGVKLRGADKVARIPVKIIPTDELPKKPDWIRVRIPVSPEVDRIKQLLRKHKLHSVCEEASCPNLGECFSGGTATFMIMGDICTRRCPFCDVGHGRPKPLDLDEPKNLAVAIADLRLKYVVITSVDRDDLRDGGAQHFADCIREIRALSPGVQLETLVPDYRGRMDVALEITAQEPPDVFNHNLETVPRLYKAARPGSDYDWSLDLLQKFKQLVPHVPTKSGLMLGLGETDEEVIEVMHRMREHDIDMLTLGQYLQPSRSHLPVQRFVHPDTFAWFAEEGYKMGFKNVASGPLVRSSYHADQQAHEAKIKL.

The interval 1 to 24 (MTTVQEAVPNLIPTQDATPRPAPK) is disordered. The [4Fe-4S] cluster site is built by Cys84, Cys89, Cys95, Cys110, Cys114, Cys117, and Ser324. One can recognise a Radical SAM core domain in the interval 96-313 (FSGGTATFMI…AEEGYKMGFK (218 aa)).

It belongs to the radical SAM superfamily. Lipoyl synthase family. [4Fe-4S] cluster serves as cofactor.

It is found in the cytoplasm. The enzyme catalyses [[Fe-S] cluster scaffold protein carrying a second [4Fe-4S](2+) cluster] + N(6)-octanoyl-L-lysyl-[protein] + 2 oxidized [2Fe-2S]-[ferredoxin] + 2 S-adenosyl-L-methionine + 4 H(+) = [[Fe-S] cluster scaffold protein] + N(6)-[(R)-dihydrolipoyl]-L-lysyl-[protein] + 4 Fe(3+) + 2 hydrogen sulfide + 2 5'-deoxyadenosine + 2 L-methionine + 2 reduced [2Fe-2S]-[ferredoxin]. It functions in the pathway protein modification; protein lipoylation via endogenous pathway; protein N(6)-(lipoyl)lysine from octanoyl-[acyl-carrier-protein]: step 2/2. Its function is as follows. Catalyzes the radical-mediated insertion of two sulfur atoms into the C-6 and C-8 positions of the octanoyl moiety bound to the lipoyl domains of lipoate-dependent enzymes, thereby converting the octanoylated domains into lipoylated derivatives. The polypeptide is Lipoyl synthase (Pseudomonas putida (strain ATCC 700007 / DSM 6899 / JCM 31910 / BCRC 17059 / LMG 24140 / F1)).